Here is a 348-residue protein sequence, read N- to C-terminus: L-threonine 3-dehydrogenase (348 aa).

C42 is a binding site for Zn(2+). Catalysis depends on charge relay system residues T44 and H47. H67, E68, C97, C100, C103, and C111 together coordinate Zn(2+). NAD(+) contacts are provided by residues L179, E199, R204, L266–L268, and I291–T292.

Belongs to the zinc-containing alcohol dehydrogenase family. In terms of assembly, homodimer. Homotetramer; dimer of dimers. It depends on Zn(2+) as a cofactor.

It is found in the cytoplasm. It catalyses the reaction L-threonine + NAD(+) = (2S)-2-amino-3-oxobutanoate + NADH + H(+). The protein operates within amino-acid degradation; L-threonine degradation via oxydo-reductase pathway; glycine from L-threonine: step 1/2. With respect to regulation, is totally inhibited by EDTA in vitro. In terms of biological role, catalyzes the NAD(+)-dependent oxidation of L-threonine to 2-amino-3-ketobutyrate. Is much less efficient when using NADP(+) instead of NAD(+). To a lesser extent, also catalyzes the oxidation of L-serine and DL-threo-3-phenylserine, but not that of L-allo-threonine, D-threonine and D-allo-threonine and many other L-amino acids. The chain is L-threonine 3-dehydrogenase from Pyrococcus horikoshii (strain ATCC 700860 / DSM 12428 / JCM 9974 / NBRC 100139 / OT-3).